The following is a 189-amino-acid chain: Peptidyl-tRNA hydrolase (189 aa).

Y15 contributes to the tRNA binding site. H20 serves as the catalytic Proton acceptor. Residues F66, N68, and N114 each contribute to the tRNA site.

The protein belongs to the PTH family. In terms of assembly, monomer.

It is found in the cytoplasm. The catalysed reaction is an N-acyl-L-alpha-aminoacyl-tRNA + H2O = an N-acyl-L-amino acid + a tRNA + H(+). Hydrolyzes ribosome-free peptidyl-tRNAs (with 1 or more amino acids incorporated), which drop off the ribosome during protein synthesis, or as a result of ribosome stalling. Functionally, catalyzes the release of premature peptidyl moieties from peptidyl-tRNA molecules trapped in stalled 50S ribosomal subunits, and thus maintains levels of free tRNAs and 50S ribosomes. The polypeptide is Peptidyl-tRNA hydrolase (Streptococcus suis (strain 98HAH33)).